We begin with the raw amino-acid sequence, 625 residues long: tRNA uridine 5-carboxymethylaminomethyl modification enzyme MnmG (625 aa).

14 to 19 (GAGHAG) provides a ligand contact to FAD. 273–287 (GPRYCPSIEDKIVRF) lines the NAD(+) pocket.

This sequence belongs to the MnmG family. Homodimer. Heterotetramer of two MnmE and two MnmG subunits. The cofactor is FAD.

Its subcellular location is the cytoplasm. Functionally, NAD-binding protein involved in the addition of a carboxymethylaminomethyl (cmnm) group at the wobble position (U34) of certain tRNAs, forming tRNA-cmnm(5)s(2)U34. This Clostridium botulinum (strain Loch Maree / Type A3) protein is tRNA uridine 5-carboxymethylaminomethyl modification enzyme MnmG.